Here is a 254-residue protein sequence, read N- to C-terminus: Segregation and condensation protein A (254 aa).

The protein belongs to the ScpA family. In terms of assembly, component of a cohesin-like complex composed of ScpA, ScpB and the Smc homodimer, in which ScpA and ScpB bind to the head domain of Smc. The presence of the three proteins is required for the association of the complex with DNA.

Its subcellular location is the cytoplasm. In terms of biological role, participates in chromosomal partition during cell division. May act via the formation of a condensin-like complex containing Smc and ScpB that pull DNA away from mid-cell into both cell halves. The protein is Segregation and condensation protein A of Clostridium tetani (strain Massachusetts / E88).